The primary structure comprises 414 residues: Histidine--tRNA ligase (414 aa).

It belongs to the class-II aminoacyl-tRNA synthetase family. As to quaternary structure, homodimer.

The protein localises to the cytoplasm. The enzyme catalyses tRNA(His) + L-histidine + ATP = L-histidyl-tRNA(His) + AMP + diphosphate + H(+). The protein is Histidine--tRNA ligase of Ehrlichia ruminantium (strain Gardel).